The sequence spans 261 residues: Probable membrane transporter protein PD_1894 (261 aa).

The next 8 helical transmembrane spans lie at 6-26 (LIVTIGSGGLVGFALGLLGGG), 45-64 (HIAIGTSAVAVSVNAYANLI), 78-98 (VIFALVGTLGAFLGSSIGMLI), 99-119 (DGQRLLLLFGLLMAMVGLLML), 150-170 (AASGFFGIGGGFLIVPALIFA), 175-195 (TINAIGSSLLAVGSFGLITTL), 205-225 (WTIAMEFIVGGITGGGLGTLL), and 239-259 (VFGLIVIAVAIYVIWRSWASL).

This sequence belongs to the 4-toluene sulfonate uptake permease (TSUP) (TC 2.A.102) family.

It is found in the cell membrane. The protein is Probable membrane transporter protein PD_1894 of Xylella fastidiosa (strain Temecula1 / ATCC 700964).